The primary structure comprises 24 residues: Cryptonin (24 aa).

In terms of biological role, antimicrobial peptide, active against the Gram-negative bacterium E.coli K12-594 (MIC=3.12 ug/ml), the Gram-positive bacteria B.subtilis KCTC 3086 (MIC=3.12 ug/ml), S.aureus KCTC 1928 (MIC=25 ug/ml) and M.luteus KCTC 3063 (MIC=1.56 ug/ml), the antibiotic resistant bacteria methicillin-resistant S.aureus (MRSA) (MIC=25 ug/ml) and vancomycin-resistant Enterococci (VRE) (MIC=25 ug/ml), and the fungi C.albicans KCTC 7965 (MIC=50 ug/ml) and C.tropicalis KCTC 1925 (MIC=3.12 ug/ml). Has very low hemolytic activity on rat erythrocytes. The chain is Cryptonin from Cryptotympana dubia (Korean horse cicada).